The primary structure comprises 1498 residues: Transposon Ty3-I Gag-Pol polyprotein (1498 aa).

Residues R265–A282 form a CCHC-type zinc finger. The active-site For protease activity; shared with dimeric partner is D336. Residues T470 to P490 form a disordered region. The Reverse transcriptase domain maps to L646–I823. Mg(2+) is bound by residues D712, D774, and D775. One can recognise an RNase H Ty3/gyspy-type domain in the interval D919 to Y1037. Residues H1132–C1171 are integrase-type zinc finger-like. The 166-residue stretch at L1185–L1350 folds into the Integrase catalytic domain. Residues D1201 and D1262 each coordinate Mg(2+).

The protease is a homodimer, whose active site consists of two apposed aspartic acid residues. Post-translationally, initially, virus-like particles (VLPs) are composed of the structural unprocessed proteins Gag and Gag-Pol, and also contain the host initiator methionine tRNA (tRNA(i)-Met) which serves as a primer for minus-strand DNA synthesis, and a dimer of genomic Ty RNA. Processing of the polyproteins occurs within the particle and proceeds by an ordered pathway, called maturation. First, the protease (PR) is released by autocatalytic cleavage of the Gag-Pol polyprotein, and this cleavage is a prerequisite for subsequent processing at the remaining sites to release the mature structural and catalytic proteins. Maturation takes place prior to the RT reaction and is required to produce transposition-competent VLPs.

It is found in the cytoplasm. It localises to the nucleus. The catalysed reaction is DNA(n) + a 2'-deoxyribonucleoside 5'-triphosphate = DNA(n+1) + diphosphate. It carries out the reaction Endonucleolytic cleavage to 5'-phosphomonoester.. Functionally, capsid protein (CA) is the structural component of the virus-like particle (VLP), forming the shell that encapsulates the genomic RNA-nucleocapsid complex. In terms of biological role, nucleocapsid protein p11 (NC) forms the nucleocore that coats the retro-elements dimeric RNA. Binds these RNAs through its zinc fingers. Promotes primer tRNA(i)-Met annealing to the multipartite primer-binding site (PBS), dimerization of Ty3 RNA and initiation of reverse transcription. Its function is as follows. The aspartyl protease (PR) mediates the proteolytic cleavages of the Gag and Gag-Pol polyproteins after assembly of the VLP. Reverse transcriptase/ribonuclease H (RT) is a multifunctional enzyme that catalyzes the conversion of the retro-elements RNA genome into dsDNA within the VLP. The enzyme displays a DNA polymerase activity that can copy either DNA or RNA templates, and a ribonuclease H (RNase H) activity that cleaves the RNA strand of RNA-DNA heteroduplexes during plus-strand synthesis and hydrolyzes RNA primers. The conversion leads to a linear dsDNA copy of the retrotransposon that includes long terminal repeats (LTRs) at both ends. Functionally, integrase (IN) targets the VLP to the nucleus, where a subparticle preintegration complex (PIC) containing at least integrase and the newly synthesized dsDNA copy of the retrotransposon must transit the nuclear membrane. Once in the nucleus, integrase performs the integration of the dsDNA into the host genome. The polypeptide is Transposon Ty3-I Gag-Pol polyprotein (TY3B-I) (Saccharomyces cerevisiae (strain ATCC 204508 / S288c) (Baker's yeast)).